A 253-amino-acid polypeptide reads, in one-letter code: uncharacterized protein (253 aa).

Belongs to the NAD(P)-dependent epimerase/dehydratase family.

This is an uncharacterized protein from Bacillus subtilis (strain 168).